A 257-amino-acid chain; its full sequence is Imidazole glycerol phosphate synthase subunit HisF (257 aa).

Catalysis depends on residues Asp-12 and Asp-131.

It belongs to the HisA/HisF family. Heterodimer of HisH and HisF.

It localises to the cytoplasm. It catalyses the reaction 5-[(5-phospho-1-deoxy-D-ribulos-1-ylimino)methylamino]-1-(5-phospho-beta-D-ribosyl)imidazole-4-carboxamide + L-glutamine = D-erythro-1-(imidazol-4-yl)glycerol 3-phosphate + 5-amino-1-(5-phospho-beta-D-ribosyl)imidazole-4-carboxamide + L-glutamate + H(+). It functions in the pathway amino-acid biosynthesis; L-histidine biosynthesis; L-histidine from 5-phospho-alpha-D-ribose 1-diphosphate: step 5/9. IGPS catalyzes the conversion of PRFAR and glutamine to IGP, AICAR and glutamate. The HisF subunit catalyzes the cyclization activity that produces IGP and AICAR from PRFAR using the ammonia provided by the HisH subunit. The polypeptide is Imidazole glycerol phosphate synthase subunit HisF (Teredinibacter turnerae (strain ATCC 39867 / T7901)).